Reading from the N-terminus, the 124-residue chain is Small ribosomal subunit protein uS12 (124 aa).

Position 89 is a 3-methylthioaspartic acid (D89).

It belongs to the universal ribosomal protein uS12 family. As to quaternary structure, part of the 30S ribosomal subunit. Contacts proteins S8 and S17. May interact with IF1 in the 30S initiation complex.

With S4 and S5 plays an important role in translational accuracy. In terms of biological role, interacts with and stabilizes bases of the 16S rRNA that are involved in tRNA selection in the A site and with the mRNA backbone. Located at the interface of the 30S and 50S subunits, it traverses the body of the 30S subunit contacting proteins on the other side and probably holding the rRNA structure together. The combined cluster of proteins S8, S12 and S17 appears to hold together the shoulder and platform of the 30S subunit. In Leptospira biflexa serovar Patoc (strain Patoc 1 / Ames), this protein is Small ribosomal subunit protein uS12.